We begin with the raw amino-acid sequence, 387 residues long: Cytochrome b (387 aa).

Helical transmembrane passes span 32 to 52 (FGSL…TLAM), 76 to 98 (WLVR…LHIG), 113 to 133 (TWAI…LGYV), and 179 to 199 (FFAL…MHLI). Heme b contacts are provided by histidine 82 and histidine 96. Residues histidine 183 and histidine 197 each contribute to the heme b site. Histidine 202 serves as a coordination point for a ubiquinone. Transmembrane regions (helical) follow at residues 226–246 (FIFK…IFVF), 290–310 (LLGV…PITD), 322–342 (LSKV…QIGA), and 349–369 (FIEF…VIVP).

It belongs to the cytochrome b family. Fungal cytochrome b-c1 complex contains 10 subunits; 3 respiratory subunits, 2 core proteins and 5 low-molecular weight proteins. Cytochrome b-c1 complex is a homodimer. Heme b serves as cofactor.

Its subcellular location is the mitochondrion inner membrane. In terms of biological role, component of the ubiquinol-cytochrome c reductase complex (complex III or cytochrome b-c1 complex) that is part of the mitochondrial respiratory chain. The b-c1 complex mediates electron transfer from ubiquinol to cytochrome c. Contributes to the generation of a proton gradient across the mitochondrial membrane that is then used for ATP synthesis. This chain is Cytochrome b (cob), found in Emericella nidulans (Aspergillus nidulans).